We begin with the raw amino-acid sequence, 537 residues long: O-phosphoserine--tRNA(Cys) ligase (537 aa).

Substrate is bound by residues 186 to 188, 231 to 233, 273 to 274, and Asn317; these read HMT, SAS, and YY.

This sequence belongs to the class-II aminoacyl-tRNA synthetase family. O-phosphoseryl-tRNA(Cys) synthetase subfamily. In terms of assembly, homotetramer. Interacts with SepCysS.

It carries out the reaction tRNA(Cys) + O-phospho-L-serine + ATP = O-phospho-L-seryl-tRNA(Cys) + AMP + diphosphate. Functionally, catalyzes the attachment of O-phosphoserine (Sep) to tRNA(Cys). In Methanococcus maripaludis (strain C6 / ATCC BAA-1332), this protein is O-phosphoserine--tRNA(Cys) ligase.